The following is a 336-amino-acid chain: Anthranilate phosphoribosyltransferase (336 aa).

5-phospho-alpha-D-ribose 1-diphosphate-binding positions include Gly82, 85 to 86 (GD), Thr90, 92 to 95 (NIST), 110 to 118 (KHGNRSVSS), and Ser122. Gly82 provides a ligand contact to anthranilate. Ser94 contributes to the Mg(2+) binding site. Position 113 (Asn113) interacts with anthranilate. An anthranilate-binding site is contributed by Arg168. Mg(2+) is bound by residues Asp227 and Glu228.

It belongs to the anthranilate phosphoribosyltransferase family. As to quaternary structure, homodimer. Mg(2+) serves as cofactor.

It catalyses the reaction N-(5-phospho-beta-D-ribosyl)anthranilate + diphosphate = 5-phospho-alpha-D-ribose 1-diphosphate + anthranilate. It participates in amino-acid biosynthesis; L-tryptophan biosynthesis; L-tryptophan from chorismate: step 2/5. Catalyzes the transfer of the phosphoribosyl group of 5-phosphorylribose-1-pyrophosphate (PRPP) to anthranilate to yield N-(5'-phosphoribosyl)-anthranilate (PRA). The polypeptide is Anthranilate phosphoribosyltransferase (Leptospira interrogans serogroup Icterohaemorrhagiae serovar Lai (strain 56601)).